Reading from the N-terminus, the 81-residue chain is Mipartoxin-1A (81 aa).

A signal peptide spans 1 to 21 (MKTLLLTLVVVTIVCLDLGNS). 4 disulfides stabilise this stretch: Cys24–Cys42, Cys35–Cys61, Cys65–Cys73, and Cys74–Cys79.

Belongs to the three-finger toxin family. Short-chain subfamily. In terms of tissue distribution, expressed by the venom gland.

It localises to the secreted. Its function is as follows. Snake venom neurotoxin that blocks neuromuscular transmission, presenting a postsynaptic action through the nicotinic acetylcholine receptor (nAChR). Has no cytotoxic activity. This is Mipartoxin-1A from Micrurus mipartitus (Red-tailed coral snake).